We begin with the raw amino-acid sequence, 120 residues long: Ribosome-binding factor A (120 aa).

It belongs to the RbfA family. In terms of assembly, monomer. Binds 30S ribosomal subunits, but not 50S ribosomal subunits or 70S ribosomes.

Its subcellular location is the cytoplasm. Its function is as follows. One of several proteins that assist in the late maturation steps of the functional core of the 30S ribosomal subunit. Associates with free 30S ribosomal subunits (but not with 30S subunits that are part of 70S ribosomes or polysomes). Required for efficient processing of 16S rRNA. May interact with the 5'-terminal helix region of 16S rRNA. This chain is Ribosome-binding factor A, found in Fusobacterium nucleatum subsp. nucleatum (strain ATCC 25586 / DSM 15643 / BCRC 10681 / CIP 101130 / JCM 8532 / KCTC 2640 / LMG 13131 / VPI 4355).